The sequence spans 956 residues: MGTGAADRSRGARWWLPWLGLCFWAAGAEAARGADSGEVLPDSIPSAPGTLPHFIEEPEDAYIIKSNPIALRCKARPAMQIFFKCNGEWVHQNEHVSEESLDESSGLKVREVFINVTRQQVEDFHGPEDYWCQCVAWSHLGTSKSRKASVRIAYLRKNFEQDPQGREVPIEGMIVLHCRPPEGVPAAEVEWLKNEEPIDSEQDENIDTRADHNLIIRQARLSDSGNYTCMAANIVAKRRSLSATVVVYVNGGWSSWTEWSACNVRCGRGWQKRSRTCTNPAPLNGGAFCEGMSVQKITCTALCPVDGSWEVWSEWSVCSPECEHLRIRECTAPPPRNGGKFCEGLSQESENCTDGLCILDKKPLHEIKPQRWSRRGIENASDIALYSGLGAAVVAVAVLVIGVTLYRRSHSDYGVDVIDSSALTGGFQTFNFKTVRQGNSLLLNPAMHPDLTVSRTYSGPICLQDPLDKELMTESSLFNPLSDIKVKVQSSFMVSLGVSERAEYHGKNHSGTFPHGNNRGFSTIHPRNKTPYIQNLSSLPTRTELRTTGVFGHLGGRLVMPNTGVSLLIPHGAIPEENSWEIYMSINQGEPSLQSDGSEVLLSPEVTCGPPDMLVTTPFALTIPHCADVSSEHWNIHLKKRTQQGKWEEVMSVEDESTSCYCLLDPFACHVLLDSFGTYALTGEPITDCAVKQLKVAVFGCMSCNSLDYNLRVYCVDNTPCAFQEVVSDERHQGGQLLEEPKLLHFKGNTFSLQISVLDIPPFLWRIKPFTACQEVPFSRVWSSNRQPLHCAFSLERYTPTTTQLSCKICIRQLKGHEQILQVQTSILESERETITFFAQEDSTFPAQTGPKAFKIPYSIRQRICATFDTPNAKGKDWQMLAQKNSINRNLSYFATQSSPSAVILNLWEARHQQDGDLDSLACALEEIGRTHTKLSNITEPQLDDTDFNYSRQNGL.

A signal peptide spans 1–30 (MGTGAADRSRGARWWLPWLGLCFWAAGAEA). Over 31–382 (ARGADSGEVL…SRRGIENASD (352 aa)) the chain is Extracellular. The 98-residue stretch at 52–149 (PHFIEEPEDA…LGTSKSRKAS (98 aa)) folds into the Ig-like domain. 9 cysteine pairs are disulfide-bonded: C73–C134, C85–C132, C178–C229, C262–C299, C266–C303, C277–C289, C318–C352, C322–C357, and C330–C342. Residues 89 to 91 (WVH) are important for interaction with FLRT2. N-linked (GlcNAc...) asparagine glycans are attached at residues N115 and N226. Positions 164–242 (QGREVPIEGM…NIVAKRRSLS (79 aa)) constitute an Ig-like C2-type domain. TSP type-1 domains follow at residues 250–304 (NGGW…ALCP) and 306–358 (DGSW…GLCI). A helical membrane pass occupies residues 383–403 (IALYSGLGAAVVAVAVLVIGV). Residues 404-956 (TLYRRSHSDY…DFNYSRQNGL (553 aa)) are Cytoplasmic-facing. Residues 545-685 (LRTTGVFGHL…FGTYALTGEP (141 aa)) enclose the ZU5 domain. The 78-residue stretch at 862–939 (QRICATFDTP…RTHTKLSNIT (78 aa)) folds into the Death domain.

This sequence belongs to the unc-5 family. Interacts (via extracellular domain) with FLRT2 and FLRT3 (via extracellular domain); the interaction is direct. Has higher affinity for FLRT2. Identified in a complex with FLRT3 and ADGRL3; does not interact with ADGRL3 by itself. Post-translationally, proteolytically cleaved by caspases during apoptosis. The cleavage does not take place when the receptor is associated with netrin ligand. Its cleavage by caspases is required to induce apoptosis.

The protein resides in the cell membrane. In terms of biological role, receptor for the netrin NTN4 that promotes neuronal cell survival. Plays a role in cell-cell adhesion and cell guidance. Receptor for netrin involved in cell migration. Plays a role in axon guidance by mediating axon repulsion of neuronal growth cones in the developing nervous system upon ligand binding. May play a role in apoptosis in response to DNA damage. It also acts as a dependence receptor required for apoptosis induction when not associated with netrin ligand. Mediates cell-cell adhesion via its interaction with FLRT3 on an adjacent cell. The protein is Netrin receptor UNC5D of Rattus norvegicus (Rat).